The following is a 177-amino-acid chain: Ribosome maturation factor RimM (177 aa).

The PRC barrel domain occupies 98–177; the sequence is GEEFYWRELY…RIEVDWDPGF (80 aa).

This sequence belongs to the RimM family. In terms of assembly, binds ribosomal protein uS19.

It is found in the cytoplasm. In terms of biological role, an accessory protein needed during the final step in the assembly of 30S ribosomal subunit, possibly for assembly of the head region. Essential for efficient processing of 16S rRNA. May be needed both before and after RbfA during the maturation of 16S rRNA. It has affinity for free ribosomal 30S subunits but not for 70S ribosomes. This Photobacterium profundum (strain SS9) protein is Ribosome maturation factor RimM.